The chain runs to 548 residues: T-complex protein 1 subunit theta (548 aa).

Ala2 carries the N-acetylalanine modification. Phosphoserine is present on Ser23. A Phosphotyrosine modification is found at Tyr30. ADP contacts are provided by Tyr47 and Gly48. Mg(2+) is bound at residue Asp99. Residues Gly100, Thr101, Asn102, and Phe103 each coordinate ADP. Residues Gly100, Thr101, and Asn102 each contribute to the ATP site. Phosphoserine is present on Ser162. Residues Met169, Ser170, and Lys171 each coordinate ADP. Residues Ser170 and Lys171 each contribute to the ATP site. Residues Lys224, Lys254, and Lys260 each participate in a glycyl lysine isopeptide (Lys-Gly) (interchain with G-Cter in SUMO2) cross-link. Residues Ser269 and Ser317 each carry the phosphoserine modification. N6-acetyllysine occurs at positions 318 and 400. Gly412 serves as a coordination point for ADP. Position 412 (Gly412) interacts with ATP. Lys459 participates in a covalent cross-link: Glycyl lysine isopeptide (Lys-Gly) (interchain with G-Cter in SUMO1). Lys466 carries the post-translational modification N6-acetyllysine. ADP is bound at residue Asp499. 2 residues coordinate ATP: Asp499 and Lys504. Position 505 is a phosphotyrosine (Tyr505). The tract at residues 529-548 (PAGGPKPPSGKKDWDDDQND) is disordered. A Glycyl lysine isopeptide (Lys-Gly) (interchain with G-Cter in SUMO2) cross-link involves residue Lys534. Ser537 is modified (phosphoserine). Lys539 is covalently cross-linked (Glycyl lysine isopeptide (Lys-Gly) (interchain with G-Cter in SUMO2)).

This sequence belongs to the TCP-1 chaperonin family. As to quaternary structure, component of the chaperonin-containing T-complex (TRiC), a hexadecamer composed of two identical back-to-back stacked rings enclosing a protein folding chamber. Each ring is made up of eight different subunits: TCP1/CCT1, CCT2, CCT3, CCT4, CCT5, CCT6A/CCT6, CCT7, CCT8. Interacts with PACRG. Interacts with DNAAF4. Interacts with synaptic plasticity regulator PANTS.

Its subcellular location is the cytoplasm. The protein resides in the cytoskeleton. The protein localises to the microtubule organizing center. It is found in the centrosome. It localises to the cilium basal body. It carries out the reaction ATP + H2O = ADP + phosphate + H(+). In terms of biological role, component of the chaperonin-containing T-complex (TRiC), a molecular chaperone complex that assists the folding of actin, tubulin and other proteins upon ATP hydrolysis. The TRiC complex mediates the folding of WRAP53/TCAB1, thereby regulating telomere maintenance. As part of the TRiC complex may play a role in the assembly of BBSome, a complex involved in ciliogenesis regulating transports vesicles to the cilia. The sequence is that of T-complex protein 1 subunit theta (Cct8) from Mus musculus (Mouse).